The sequence spans 381 residues: Gas vesicle protein C (381 aa).

A run of 7 repeats spans residues 22-59, 60-84, 85-122, 123-160, 161-192, 193-232, and 233-274. Residues 22–274 are 7 X approximate tandem repeats; the sequence is QAFAAYADEF…TETEVDIPPI (253 aa). The disordered stretch occupies residues 261–333; sequence AVTGTETEVD…EDDQFLDDET (73 aa). The segment covering 276-318 has biased composition (acidic residues); that stretch reads DSVEPDGEDEDSKADDVEAEAEVETVEMEFGAEMDTEADEDVQ.

The protein belongs to the halobacterial gas vesicle GvpC family. Detected as 2 slightly different sizes in vivo; the proteins appears larger in SDS-PAGE probably due to the acidic tail.

Its subcellular location is the gas vesicle. Functionally, confers stability, involved in shaping gas vesicles (GV), hollow, gas filled proteinaceous nanostructures found in some microorganisms. They allow positioning of halobacteria at the optimal depth for growth in the poorly aerated, shallow brine pools of their habitat. Expression of a 9.5 kb mc-vac DNA fragment containing 2 divergently transcribed regions (gvpD-gvpE-gvpF-gvpG-gvpH-gvpI-gvpJ-gvpK-gvpL-gvpM and gvpA-gvpC-gvpN-gvpO) allows H.volcanii to produce gas vesicles. This Haloferax mediterranei (strain ATCC 33500 / DSM 1411 / JCM 8866 / NBRC 14739 / NCIMB 2177 / R-4) (Halobacterium mediterranei) protein is Gas vesicle protein C.